Reading from the N-terminus, the 325-residue chain is MSRLALNRYSRCFSRLKTLTTPLFFSSSAASNRDGDYQIGPPPIRVGLTESAGRAVFATRKIGAGDLIHTAKPVVACPSLLKLDSVCYLCLKKLMGSAKFEDRGVSYCSQECQENSKGFLDVETRADWSSFDDYCRTHNFKYPLMVKRLCCMIISGARPADCLDILQPAVLSSEMISKIEDGYGLLWNAFRKANFKDDDVAFLTKQWYTAILARIRINAFRIDLVGGSCGEDLLSLAAASVEGEGAVGHAVYMLPSFYNHDCDPNAHIIWLHNADARLNTLRDVEEGEELRICYIDASMGYEARQTILSQGFGFLCNCLRCQSTD.

Residues 1–30 form the signal peptide; the sequence is MSRLALNRYSRCFSRLKTLTTPLFFSSSAA. The region spanning 42-295 is the SET domain; that stretch reads PPIRVGLTES…EGEELRICYI (254 aa).

The protein belongs to the class V-like SAM-binding methyltransferase superfamily. Histone-lysine methyltransferase family. TRX/MLL subfamily.

The protein localises to the nucleus. It carries out the reaction L-lysyl-[histone] + S-adenosyl-L-methionine = N(6)-methyl-L-lysyl-[histone] + S-adenosyl-L-homocysteine + H(+). Its function is as follows. Histone methyltransferase. The chain is Histone-lysine N-methyltransferase ATXR4 (ATXR4) from Arabidopsis thaliana (Mouse-ear cress).